The primary structure comprises 454 residues: tRNA(Ile)-lysidine synthase (454 aa).

31 to 36 serves as a coordination point for ATP; the sequence is SGGADS.

This sequence belongs to the tRNA(Ile)-lysidine synthase family.

It localises to the cytoplasm. It carries out the reaction cytidine(34) in tRNA(Ile2) + L-lysine + ATP = lysidine(34) in tRNA(Ile2) + AMP + diphosphate + H(+). Ligates lysine onto the cytidine present at position 34 of the AUA codon-specific tRNA(Ile) that contains the anticodon CAU, in an ATP-dependent manner. Cytidine is converted to lysidine, thus changing the amino acid specificity of the tRNA from methionine to isoleucine. This Porphyromonas gingivalis (strain ATCC BAA-308 / W83) protein is tRNA(Ile)-lysidine synthase.